Reading from the N-terminus, the 167-residue chain is CASP-like protein 3 (167 aa).

The Cytoplasmic portion of the chain corresponds to 1-2 (MK). The chain crosses the membrane as a helical span at residues 3–23 (IIAIAPRIGAAVLSLVAFSVM). The Extracellular segment spans residues 24–48 (ASTGERRSGAGSTFKVKFSDFQAYN). A helical transmembrane segment spans residues 49–69 (YLIALNVILFVYSTVQLVMLV). Over 70–80 (NSNHNSSFSSP) the chain is Cytoplasmic. A helical transmembrane segment spans residues 81 to 101 (FKWVLGVYICDQLLAFLLFSA). Residues 102 to 137 (SSSAATASELSRHGLHNIWPPACATWKLWTFCSKAE) are Extracellular-facing. The helical transmembrane segment at 138 to 158 (AAVAMSFLSSFFIITSSILSG) threads the bilayer. At 159-167 (YHLSKVPAV) the chain is on the cytoplasmic side.

Belongs to the Casparian strip membrane proteins (CASP) family. In terms of assembly, homodimer and heterodimers.

It is found in the cell membrane. In Osmunda lancea (Fern), this protein is CASP-like protein 3.